A 306-amino-acid chain; its full sequence is Olfactory receptor 8G17 (306 aa).

Topologically, residues 1–28 (MEKGNQSTVNKFFLSGLTEQPELQLPLF) are extracellular. N-linked (GlcNAc...) asparagine glycosylation occurs at asparagine 5. The chain crosses the membrane as a helical span at residues 29 to 49 (LLFLGIYLLTVLGNLGMIILI). At 50–56 (LLSSYLH) the chain is on the cytoplasmic side. Residues 57–77 (TPMYFFLSSLSFIDFCQSTVI) traverse the membrane as a helical segment. Over 78–97 (TPKMLVKFVREKNEISYPEC) the chain is Extracellular. A helical membrane pass occupies residues 98 to 118 (ITQLCFFVIFAVSESYMLAAM). Residues 119-143 (AYDRYVAICSPLLYSSIMSQHKCLS) lie on the Cytoplasmic side of the membrane. Residues 144–164 (LVLGVYILGIVCASAHVGCIF) traverse the membrane as a helical segment. The Extracellular segment spans residues 165-196 (RIDFCKSDLINHYFCDLISILNLSCSNIFVND). The chain crosses the membrane as a helical span at residues 197–217 (LVILIFSLINTIFPTLTILSS). Topologically, residues 218-236 (YAFIIISILRIKSTEGRSK) are cytoplasmic. A helical membrane pass occupies residues 237 to 257 (AFSTCSSHISAVAIFYISAGF). Over 258 to 271 (TYLNPSSSHSMDEG) the chain is Extracellular. Residues 272–292 (KVSSIFYTIIVPMLNPLIYSL) form a helical membrane-spanning segment. Over 293-306 (RNKDVKIALKKMIE) the chain is Cytoplasmic.

This sequence belongs to the G-protein coupled receptor 1 family.

The protein resides in the cell membrane. Functionally, odorant receptor. The protein is Olfactory receptor 8G17 of Mus musculus (Mouse).